The primary structure comprises 203 residues: Transmembrane protein 269 (203 aa).

A run of 3 helical transmembrane segments spans residues 60–80 (GLAS…LAII), 124–144 (FILC…SYYP), and 157–177 (LVYI…SAFY).

The protein resides in the membrane. The polypeptide is Transmembrane protein 269 (Homo sapiens (Human)).